Consider the following 460-residue polypeptide: Adenosylhomocysteinase (460 aa).

The substrate site is built by Thr-83, Asp-158, and Glu-184. Residue 185–187 participates in NAD(+) binding; that stretch reads TTT. Residues Lys-214 and Asp-218 each coordinate substrate. NAD(+) contacts are provided by residues Asn-219, 248–253, Glu-271, 327–329, and Asn-373; these read GYGDVG and IGH.

The protein belongs to the adenosylhomocysteinase family. Requires NAD(+) as cofactor.

It is found in the cytoplasm. It carries out the reaction S-adenosyl-L-homocysteine + H2O = L-homocysteine + adenosine. It participates in amino-acid biosynthesis; L-homocysteine biosynthesis; L-homocysteine from S-adenosyl-L-homocysteine: step 1/1. In terms of biological role, may play a key role in the regulation of the intracellular concentration of adenosylhomocysteine. In Bdellovibrio bacteriovorus (strain ATCC 15356 / DSM 50701 / NCIMB 9529 / HD100), this protein is Adenosylhomocysteinase.